Reading from the N-terminus, the 400-residue chain is Probable glucan endo-1,6-beta-glucosidase B (400 aa).

Positions 1 to 17 are cleaved as a signal peptide; the sequence is MIRRLAALSALSGLATA. An N-linked (GlcNAc...) asparagine glycan is attached at Asn30. Glu219 acts as the Proton donor in catalysis. An N-linked (GlcNAc...) asparagine glycan is attached at Asn272. Glu320 functions as the Nucleophile in the catalytic mechanism.

It belongs to the glycosyl hydrolase 5 (cellulase A) family.

It is found in the secreted. It carries out the reaction Random hydrolysis of (1-&gt;6)-linkages in (1-&gt;6)-beta-D-glucans.. Its function is as follows. Beta-glucanases participate in the metabolism of beta-glucan, the main structural component of the cell wall. Acts on lutean, pustulan and 1,6-oligo-beta-D-glucosides. In Neosartorya fischeri (strain ATCC 1020 / DSM 3700 / CBS 544.65 / FGSC A1164 / JCM 1740 / NRRL 181 / WB 181) (Aspergillus fischerianus), this protein is Probable glucan endo-1,6-beta-glucosidase B (exgB).